The following is a 392-amino-acid chain: Metacaspase-1 (392 aa).

Polar residues predominate over residues 1-14; that stretch reads MYPGSGNYSYNNRP. The disordered stretch occupies residues 1 to 87; that stretch reads MYPGSGNYSY…PSSIQQGNGQ (87 aa). The span at 41 to 51 shows a compositional bias: low complexity; sequence QQQQYQDQYQG. The span at 53-63 shows a compositional bias: polar residues; that stretch reads NRGQYQGQYQD. Active-site residues include His-182 and Cys-238.

The protein belongs to the peptidase C14B family.

Its function is as follows. Involved in cell death (apoptosis). This is Metacaspase-1 (MCA1) from Candida glabrata (strain ATCC 2001 / BCRC 20586 / JCM 3761 / NBRC 0622 / NRRL Y-65 / CBS 138) (Yeast).